The chain runs to 350 residues: MPVLHNRISNDALKAKMLAESEPRTTISFYKYFHIADPKVTRAALYQLFTALNVFGRVYLAHEGMNAQISVPASNVETFRAQLYAFDPALEGLRLNIALDDDGKSFWVLRMKVRDRIVADGIDDPHFDASNVGEYLQAAEVNAMLDDPDALFIDMRNHYEYEVGHFENALEIPADTFREQLPKAVEMMQAHKDKKIVMYCTGGIRCEKASAWMKHNGFNKVWHIEGGIIEYARKAREQGLPVRFIGKNFVFDERMGERISDEIIAHCHQCGAPCDSHTNCKNDGCHLLFIQCPVCAEKYKGCCSEICCEESALPPEEQRRRRAGRENGNKIFNKSRGRLNTTLGIPEPTE.

Positions 146-240 constitute a Rhodanese domain; sequence DDPDALFIDM…YARKAREQGL (95 aa). Residue cysteine 200 is the Cysteine persulfide intermediate of the active site.

It belongs to the TrhO family.

It carries out the reaction uridine(34) in tRNA + AH2 + O2 = 5-hydroxyuridine(34) in tRNA + A + H2O. In terms of biological role, catalyzes oxygen-dependent 5-hydroxyuridine (ho5U) modification at position 34 in tRNAs. This chain is tRNA uridine(34) hydroxylase, found in Shigella dysenteriae serotype 1 (strain Sd197).